A 1006-amino-acid chain; its full sequence is Retinoblastoma-related protein (1006 aa).

Positions 411-604 (TPVTTAMTTA…EKGSSMYNSL (194 aa)) are domain A. Positions 411-855 (TPVTTAMTTA…NEIFVPAVKP (445 aa)) are pocket. Residues 605 to 724 (IVARPALSAE…PGGGGETCAE (120 aa)) are spacer. A domain B region spans residues 725–855 (TAVNVFFSKI…NEIFVPAVKP (131 aa)). Residues 866–893 (AQSGSQVPEAKNNTNGVNPSSPRTSSFP) show a composition bias toward polar residues. The interval 866–898 (AQSGSQVPEAKNNTNGVNPSSPRTSSFPSLPDM) is disordered.

Belongs to the retinoblastoma protein (RB) family.

It localises to the nucleus. Functionally, regulator of biological processes that recruits a histone deacetylase to control gene transcription. May play a role in the entry into mitosis, negatively regulating the cell proliferation. Formation of stable complexes with geminiviridae replication-associated proteins may create a cellular environment which favors viral DNA replication. This is Retinoblastoma-related protein (RB) from Scutellaria baicalensis (Baical skullcap).